Consider the following 498-residue polypeptide: ATP synthase subunit alpha 1 (498 aa).

164–171 (GNRQSGKT) contributes to the ATP binding site.

This sequence belongs to the ATPase alpha/beta chains family. As to quaternary structure, F-type ATPases have 2 components, CF(1) - the catalytic core - and CF(0) - the membrane proton channel. CF(1) has five subunits: alpha(3), beta(3), gamma(1), delta(1), epsilon(1). CF(0) has three main subunits: a(1), b(2) and c(9-12). The alpha and beta chains form an alternating ring which encloses part of the gamma chain. CF(1) is attached to CF(0) by a central stalk formed by the gamma and epsilon chains, while a peripheral stalk is formed by the delta and b chains.

It is found in the cell membrane. The enzyme catalyses ATP + H2O + 4 H(+)(in) = ADP + phosphate + 5 H(+)(out). Produces ATP from ADP in the presence of a proton gradient across the membrane. The alpha chain is a regulatory subunit. The polypeptide is ATP synthase subunit alpha 1 (Listeria welshimeri serovar 6b (strain ATCC 35897 / DSM 20650 / CCUG 15529 / CIP 8149 / NCTC 11857 / SLCC 5334 / V8)).